A 192-amino-acid chain; its full sequence is Orotate phosphoribosyltransferase (192 aa).

Position 116-124 (116-124 (EDIVTTGLS)) interacts with 5-phospho-alpha-D-ribose 1-diphosphate. 2 residues coordinate orotate: T120 and R148.

This sequence belongs to the purine/pyrimidine phosphoribosyltransferase family. PyrE subfamily. In terms of assembly, homodimer. It depends on Mg(2+) as a cofactor.

It catalyses the reaction orotidine 5'-phosphate + diphosphate = orotate + 5-phospho-alpha-D-ribose 1-diphosphate. It functions in the pathway pyrimidine metabolism; UMP biosynthesis via de novo pathway; UMP from orotate: step 1/2. Functionally, catalyzes the transfer of a ribosyl phosphate group from 5-phosphoribose 1-diphosphate to orotate, leading to the formation of orotidine monophosphate (OMP). In Bartonella bacilliformis (strain ATCC 35685 / KC583 / Herrer 020/F12,63), this protein is Orotate phosphoribosyltransferase.